We begin with the raw amino-acid sequence, 104 residues long: Holotricin-3 (104 aa).

A signal peptide spans Met-1–Pro-20. The interval Gly-22–Tyr-104 is disordered. Residues Pro-23–Gly-97 are compositionally biased toward gly residues. 18 consecutive repeat copies span residues His-27–Gly-30, His-31–Gly-34, His-35–Gly-38, His-39–Gly-42, Gln-43–Gly-46, His-47–Gly-50, Pro-51–Gly-54, Phe-55–Gly-58, His-59–Gly-62, His-63–Gly-66, Gly-67–Gly-70, Gly-71–Gly-74, Gly-75–Ser-78, Pro-79–Gly-82, Ala-83–Gly-86, Tyr-87–Gly-90, His-91–Gly-94, and His-96–Gly-98. Residues His-27 to Gly-98 are 18 X 4 AA approximate tandem repeats of H-G-G-G.

The protein to T.molitor tenecin 3.

It localises to the secreted. Functionally, has antifungal activity against C.albicans. The chain is Holotricin-3 from Holotrichia diomphalia (Korean black chafer).